Reading from the N-terminus, the 220-residue chain is MNLAIALDSPHPGLASYTILPRPFYHISLKPVSWPDETMRPAKSTDSVFVRTPVEAWVAPSPPDDKVAESSYLMFRAMYAVFTRDEKDLPLPALVLCRLIKASLRKDRKLYAELACRTADIGGKDTHVRLIISVLRAVYNDHYDYWSRLRVVLCYTVVFAVRNYLDDHKSAAFVLGAIAHYLALYRRLWFARLGGMPRSLRRQFPVTWALASLTDFLKSL.

This sequence belongs to the Epstein-Barr virus BALF1 family. As to quaternary structure, interacts with BHRF1; this interaction modulates BHRF1 activity. Interacts with host BAX and BAK1.

The protein resides in the host cytoplasm. In terms of biological role, modulates the antiapoptotic activity of the viral protein BHRF1. May also play an active part in oncogenesis in Burkitt's lymphomy and nasopharyngeal carcinoma. This Homo sapiens (Human) protein is Apoptosis regulator BALF1.